A 227-amino-acid polypeptide reads, in one-letter code: Cytochrome c oxidase subunit 2 (227 aa).

Topologically, residues 1-14 are mitochondrial intermembrane; the sequence is MAYPMQLGFQDATS. A helical membrane pass occupies residues 15-45; sequence PIMEELLHFHDHTLMIVFLISSLVLYIISLM. Residues 46–59 are Mitochondrial matrix-facing; that stretch reads LTTKLTHTSTMDAQ. Residues 60–87 form a helical membrane-spanning segment; the sequence is EVETIWTILPAIILILIALPSLRILYMM. At 88-227 the chain is on the mitochondrial intermembrane side; the sequence is DEINNPSLTV…YFEKWSASML (140 aa). Histidine 161, cysteine 196, glutamate 198, cysteine 200, histidine 204, and methionine 207 together coordinate Cu cation. Glutamate 198 lines the Mg(2+) pocket. Tyrosine 218 is subject to Phosphotyrosine.

This sequence belongs to the cytochrome c oxidase subunit 2 family. In terms of assembly, component of the cytochrome c oxidase (complex IV, CIV), a multisubunit enzyme composed of 14 subunits. The complex is composed of a catalytic core of 3 subunits MT-CO1, MT-CO2 and MT-CO3, encoded in the mitochondrial DNA, and 11 supernumerary subunits COX4I, COX5A, COX5B, COX6A, COX6B, COX6C, COX7A, COX7B, COX7C, COX8 and NDUFA4, which are encoded in the nuclear genome. The complex exists as a monomer or a dimer and forms supercomplexes (SCs) in the inner mitochondrial membrane with NADH-ubiquinone oxidoreductase (complex I, CI) and ubiquinol-cytochrome c oxidoreductase (cytochrome b-c1 complex, complex III, CIII), resulting in different assemblies (supercomplex SCI(1)III(2)IV(1) and megacomplex MCI(2)III(2)IV(2)). Found in a complex with TMEM177, COA6, COX18, COX20, SCO1 and SCO2. Interacts with TMEM177 in a COX20-dependent manner. Interacts with COX20. Interacts with COX16. It depends on Cu cation as a cofactor.

It is found in the mitochondrion inner membrane. It carries out the reaction 4 Fe(II)-[cytochrome c] + O2 + 8 H(+)(in) = 4 Fe(III)-[cytochrome c] + 2 H2O + 4 H(+)(out). In terms of biological role, component of the cytochrome c oxidase, the last enzyme in the mitochondrial electron transport chain which drives oxidative phosphorylation. The respiratory chain contains 3 multisubunit complexes succinate dehydrogenase (complex II, CII), ubiquinol-cytochrome c oxidoreductase (cytochrome b-c1 complex, complex III, CIII) and cytochrome c oxidase (complex IV, CIV), that cooperate to transfer electrons derived from NADH and succinate to molecular oxygen, creating an electrochemical gradient over the inner membrane that drives transmembrane transport and the ATP synthase. Cytochrome c oxidase is the component of the respiratory chain that catalyzes the reduction of oxygen to water. Electrons originating from reduced cytochrome c in the intermembrane space (IMS) are transferred via the dinuclear copper A center (CU(A)) of subunit 2 and heme A of subunit 1 to the active site in subunit 1, a binuclear center (BNC) formed by heme A3 and copper B (CU(B)). The BNC reduces molecular oxygen to 2 water molecules using 4 electrons from cytochrome c in the IMS and 4 protons from the mitochondrial matrix. The sequence is that of Cytochrome c oxidase subunit 2 (MT-CO2) from Bison bonasus (European bison).